Consider the following 310-residue polypeptide: Putative S-adenosyl-L-methionine-dependent methyltransferase MMAR_0357 (310 aa).

Residues Asp-132 and 161 to 162 (DL) contribute to the S-adenosyl-L-methionine site.

This sequence belongs to the UPF0677 family.

Exhibits S-adenosyl-L-methionine-dependent methyltransferase activity. This Mycobacterium marinum (strain ATCC BAA-535 / M) protein is Putative S-adenosyl-L-methionine-dependent methyltransferase MMAR_0357.